Consider the following 363-residue polypeptide: UDP-3-O-acylglucosamine N-acyltransferase (363 aa).

The active-site Proton acceptor is the H259.

This sequence belongs to the transferase hexapeptide repeat family. LpxD subfamily. As to quaternary structure, homotrimer.

It catalyses the reaction a UDP-3-O-[(3R)-3-hydroxyacyl]-alpha-D-glucosamine + a (3R)-hydroxyacyl-[ACP] = a UDP-2-N,3-O-bis[(3R)-3-hydroxyacyl]-alpha-D-glucosamine + holo-[ACP] + H(+). It participates in bacterial outer membrane biogenesis; LPS lipid A biosynthesis. In terms of biological role, catalyzes the N-acylation of UDP-3-O-acylglucosamine using 3-hydroxyacyl-ACP as the acyl donor. Is involved in the biosynthesis of lipid A, a phosphorylated glycolipid that anchors the lipopolysaccharide to the outer membrane of the cell. The chain is UDP-3-O-acylglucosamine N-acyltransferase from Ruegeria pomeroyi (strain ATCC 700808 / DSM 15171 / DSS-3) (Silicibacter pomeroyi).